The primary structure comprises 101 residues: UPF0235 protein CJA_0091 (101 aa).

The protein belongs to the UPF0235 family.

This chain is UPF0235 protein CJA_0091, found in Cellvibrio japonicus (strain Ueda107) (Pseudomonas fluorescens subsp. cellulosa).